Here is a 428-residue protein sequence, read N- to C-terminus: MSVTVIVGAQWGDEGKGKITDYLAERSEVVVRYQGGNNAGHTVEKDGVQYKLHLIPSGILYPDKICVIGNGVVVDPSALLKEIEDLKAKGVEVKEDNLKISDRAHVVFPYHIKEDELEEKGKGDEDLGTTKKGIGPCYRDKTERIGIRMCDLMNAEVFREKLKKNLERKNKIFKDIYGEDGFDFEQIFETYREYAERLRPYVTDTSVLLYNLAKEGKKILFEGAQGTLLDLDFGTYPYVTASHPVAGGATIGAGIGPTMIDNVIGVVKAYTTRVGKGPFPTELKDEIGDFLREKGYEYGTTTGRPRRCGWIDIVMLRYAVRVSGITSLALTKLDTLTGLEKIKICTGYKINGKIIEDFPASLEELKMCEPIYEEMEGWSENIQDVRSFEDLPLNAKKYVKRLEELVGVEFSIISVGPEREETIVLRNF.

GTP contacts are provided by residues 12-18 (GDEGKGK) and 40-42 (GHT). The Proton acceptor role is filled by D13. Residues D13 and G40 each contribute to the Mg(2+) site. Residues 13–16 (DEGK), 38–41 (NAGH), T130, R144, Q225, T240, and R304 contribute to the IMP site. H41 acts as the Proton donor in catalysis. 300 to 306 (TTTGRPR) contributes to the substrate binding site. Residues R306, 332 to 334 (KLD), and 414 to 416 (SVG) each bind GTP.

This sequence belongs to the adenylosuccinate synthetase family. As to quaternary structure, homodimer. The cofactor is Mg(2+).

It localises to the cytoplasm. The catalysed reaction is IMP + L-aspartate + GTP = N(6)-(1,2-dicarboxyethyl)-AMP + GDP + phosphate + 2 H(+). It functions in the pathway purine metabolism; AMP biosynthesis via de novo pathway; AMP from IMP: step 1/2. Its function is as follows. Plays an important role in the de novo pathway of purine nucleotide biosynthesis. Catalyzes the first committed step in the biosynthesis of AMP from IMP. The polypeptide is Adenylosuccinate synthetase (Caldanaerobacter subterraneus subsp. tengcongensis (strain DSM 15242 / JCM 11007 / NBRC 100824 / MB4) (Thermoanaerobacter tengcongensis)).